Reading from the N-terminus, the 339-residue chain is Glycerol-3-phosphate dehydrogenase [NAD(P)+] (339 aa).

NADPH contacts are provided by Ser15, Tyr16, His36, and Lys110. Positions 110, 139, and 141 each coordinate sn-glycerol 3-phosphate. NADPH is bound at residue Ala143. Residues Lys195, Asp248, Ser258, Arg259, and Asn260 each coordinate sn-glycerol 3-phosphate. Lys195 (proton acceptor) is an active-site residue. Arg259 is an NADPH binding site. The NADPH site is built by Val283 and Glu285.

Belongs to the NAD-dependent glycerol-3-phosphate dehydrogenase family.

It is found in the cytoplasm. The enzyme catalyses sn-glycerol 3-phosphate + NAD(+) = dihydroxyacetone phosphate + NADH + H(+). It catalyses the reaction sn-glycerol 3-phosphate + NADP(+) = dihydroxyacetone phosphate + NADPH + H(+). The protein operates within membrane lipid metabolism; glycerophospholipid metabolism. Functionally, catalyzes the reduction of the glycolytic intermediate dihydroxyacetone phosphate (DHAP) to sn-glycerol 3-phosphate (G3P), the key precursor for phospholipid synthesis. The polypeptide is Glycerol-3-phosphate dehydrogenase [NAD(P)+] (Shigella dysenteriae serotype 1 (strain Sd197)).